The chain runs to 415 residues: Serine hydroxymethyltransferase (415 aa).

Positions 1–10 (MERSHIRDVD) are enriched in basic and acidic residues. The interval 1 to 21 (MERSHIRDVDPDAADALSSER) is disordered. (6S)-5,6,7,8-tetrahydrofolate is bound by residues Leu-119 and 123 to 125 (GHL). Lys-228 carries the post-translational modification N6-(pyridoxal phosphate)lysine. (6S)-5,6,7,8-tetrahydrofolate is bound at residue 353–355 (SAF).

This sequence belongs to the SHMT family. As to quaternary structure, homodimer. The cofactor is pyridoxal 5'-phosphate.

The protein resides in the cytoplasm. It carries out the reaction (6R)-5,10-methylene-5,6,7,8-tetrahydrofolate + glycine + H2O = (6S)-5,6,7,8-tetrahydrofolate + L-serine. Its pathway is one-carbon metabolism; tetrahydrofolate interconversion. It participates in amino-acid biosynthesis; glycine biosynthesis; glycine from L-serine: step 1/1. Catalyzes the reversible interconversion of serine and glycine with tetrahydrofolate (THF) serving as the one-carbon carrier. Also exhibits THF-independent aldolase activity toward beta-hydroxyamino acids, producing glycine and aldehydes, via a retro-aldol mechanism. The protein is Serine hydroxymethyltransferase of Haloquadratum walsbyi (strain DSM 16790 / HBSQ001).